The chain runs to 409 residues: Arginine deiminase (409 aa).

Residue cysteine 399 is the Amidino-cysteine intermediate of the active site.

The protein belongs to the arginine deiminase family.

It is found in the cytoplasm. It catalyses the reaction L-arginine + H2O = L-citrulline + NH4(+). It functions in the pathway amino-acid degradation; L-arginine degradation via ADI pathway; carbamoyl phosphate from L-arginine: step 1/2. This Borreliella afzelii (Borrelia afzelii) protein is Arginine deiminase (arcA).